The primary structure comprises 195 residues: HTH-type transcriptional regulator BetI (195 aa).

The region spanning 8 to 68 (EIRRAQLIDA…ATMRHVLRDL (61 aa)) is the HTH tetR-type domain. The segment at residues 31–50 (TLASVAQRASISTGIVSHYF) is a DNA-binding region (H-T-H motif).

The protein operates within amine and polyamine biosynthesis; betaine biosynthesis via choline pathway [regulation]. Functionally, repressor involved in the biosynthesis of the osmoprotectant glycine betaine. It represses transcription of the choline transporter BetT and the genes of BetAB involved in the synthesis of glycine betaine. This chain is HTH-type transcriptional regulator BetI, found in Paraburkholderia phytofirmans (strain DSM 17436 / LMG 22146 / PsJN) (Burkholderia phytofirmans).